Here is a 444-residue protein sequence, read N- to C-terminus: MRNIIYFILLLLFSFKGYALETINIEHGQAAPTPIAVNKFNIDSSADYVLGNDVVKVISNDLKLSGVFCPISSASFIEERTGIEYKPLFAAWRQINASLLVNGEIKKLESGKLKISFILWDTLLEKQLAGEILEVPENLWRRAAHKIADKIYEKITGDAGYFDTKIVYVSESTSLPKIKRIALMDYDGANNKYLTNGRSLVLTPRFARSADKIFYVSYATKRRALVYEKDLKTGKESVVGDFSGISFAPRFSPDGRKAVMSIAKNGSTHIYEIDLATKRLHKLTDGFGINTSPSYSPDGKKIVYNSDRNGVPQLYIMNSDGSDVQRISFGGGSYTAPSWSPRGDYIAFTKIIRGAEGKTFNIGIMKAYPQDDENRERIITSGYLVESPCWSPNGRVIMFAKGWPSGAKAPGKNKIFAIDLTGHNEREIITPEDASDPEWSGVLN.

The N-terminal stretch at 1–19 is a signal peptide; sequence MRNIIYFILLLLFSFKGYA.

Belongs to the TolB family. As to quaternary structure, the Tol-Pal system is composed of five core proteins: the inner membrane proteins TolA, TolQ and TolR, the periplasmic protein TolB and the outer membrane protein Pal. They form a network linking the inner and outer membranes and the peptidoglycan layer.

It is found in the periplasm. Part of the Tol-Pal system, which plays a role in outer membrane invagination during cell division and is important for maintaining outer membrane integrity. The polypeptide is Tol-Pal system protein TolB (Rickettsia akari (strain Hartford)).